A 580-amino-acid polypeptide reads, in one-letter code: 2-hydroxyacyl-CoA lyase 1 (580 aa).

E47 is a thiamine diphosphate binding site. The interval 413-494 (TMDIGRLCIP…FIVLNNNGVY (82 aa)) is thiamine pyrophosphate binding. 2 residues coordinate Mg(2+): D463 and N490.

Belongs to the TPP enzyme family. Homotetramer. Mg(2+) serves as cofactor. The cofactor is thiamine diphosphate.

It localises to the peroxisome. It carries out the reaction a 2-hydroxy-3-methyl fatty acyl-CoA = a 2-methyl-branched fatty aldehyde + formyl-CoA. The catalysed reaction is an (R)-2-hydroxy-long-chain-fatty acyl-CoA = a long-chain fatty aldehyde + formyl-CoA. It catalyses the reaction 2-hydroxy-3-methylhexadecanoyl-CoA = 2-methylpentadecanal + formyl-CoA. The enzyme catalyses 2-hydroxyoctadecanoyl-CoA = heptadecanal + formyl-CoA. Functionally, peroxisomal 2-OH acyl-CoA lyase involved in the cleavage (C1 removal) reaction in the fatty acid alpha-oxydation in a thiamine pyrophosphate (TPP)-dependent manner. Involved in the degradation of 3-methyl-branched fatty acids and the shortening of 2-hydroxy long-chain fatty acids. In Dictyostelium discoideum (Social amoeba), this protein is 2-hydroxyacyl-CoA lyase 1 (hacl1).